Here is a 154-residue protein sequence, read N- to C-terminus: 6,7-dimethyl-8-ribityllumazine synthase (154 aa).

5-amino-6-(D-ribitylamino)uracil contacts are provided by residues Phe22, 56–58 (AFE), and 80–82 (AVI). 85–86 (AT) contributes to the (2S)-2-hydroxy-3-oxobutyl phosphate binding site. Residue His88 is the Proton donor of the active site. Residue Phe113 participates in 5-amino-6-(D-ribitylamino)uracil binding. Residue Arg127 coordinates (2S)-2-hydroxy-3-oxobutyl phosphate.

The protein belongs to the DMRL synthase family. Forms an icosahedral capsid composed of 60 subunits, arranged as a dodecamer of pentamers.

It catalyses the reaction (2S)-2-hydroxy-3-oxobutyl phosphate + 5-amino-6-(D-ribitylamino)uracil = 6,7-dimethyl-8-(1-D-ribityl)lumazine + phosphate + 2 H2O + H(+). It functions in the pathway cofactor biosynthesis; riboflavin biosynthesis; riboflavin from 2-hydroxy-3-oxobutyl phosphate and 5-amino-6-(D-ribitylamino)uracil: step 1/2. Functionally, catalyzes the formation of 6,7-dimethyl-8-ribityllumazine by condensation of 5-amino-6-(D-ribitylamino)uracil with 3,4-dihydroxy-2-butanone 4-phosphate. This is the penultimate step in the biosynthesis of riboflavin. In Geobacillus sp. (strain WCH70), this protein is 6,7-dimethyl-8-ribityllumazine synthase.